Reading from the N-terminus, the 280-residue chain is Large ribosomal subunit protein uL2 (280 aa).

Disordered stretches follow at residues 1–58 and 226–280; these read MAIR…GGGH and MNPV…KHGR. Composition is skewed to basic residues over residues 37–58 and 268–280; these read LHGHGGRNAHGRITTRHKGGGH and IVRRRRTGKKHGR.

It belongs to the universal ribosomal protein uL2 family. Part of the 50S ribosomal subunit. Forms a bridge to the 30S subunit in the 70S ribosome.

In terms of biological role, one of the primary rRNA binding proteins. Required for association of the 30S and 50S subunits to form the 70S ribosome, for tRNA binding and peptide bond formation. It has been suggested to have peptidyltransferase activity; this is somewhat controversial. Makes several contacts with the 16S rRNA in the 70S ribosome. This is Large ribosomal subunit protein uL2 from Mycolicibacterium paratuberculosis (strain ATCC BAA-968 / K-10) (Mycobacterium paratuberculosis).